Consider the following 114-residue polypeptide: Cytochrome b-c1 complex subunit 1, mitochondrial (114 aa).

N6-acetyllysine is present on K31.

The protein belongs to the peptidase M16 family. UQCRC1/QCR1 subfamily. In terms of assembly, component of the ubiquinol-cytochrome c oxidoreductase (cytochrome b-c1 complex, complex III, CIII), a multisubunit enzyme composed of 11 subunits. The complex is composed of 3 respiratory subunits cytochrome b, cytochrome c1 and Rieske protein UQCRFS1, 2 core protein subunits UQCRC1/QCR1 and UQCRC2/QCR2, and 6 low-molecular weight protein subunits UQCRH/QCR6, UQCRB/QCR7, UQCRQ/QCR8, UQCR10/QCR9, UQCR11/QCR10 and subunit 9, the cleavage product of Rieske protein UQCRFS1. The complex exists as an obligatory dimer and forms supercomplexes (SCs) in the inner mitochondrial membrane with NADH-ubiquinone oxidoreductase (complex I, CI) and cytochrome c oxidase (complex IV, CIV), resulting in different assemblies (supercomplex SCI(1)III(2)IV(1) and megacomplex MCI(2)III(2)IV(2)). Interacts with UQCC6. Interacts with STMP1.

The protein localises to the mitochondrion inner membrane. Component of the ubiquinol-cytochrome c oxidoreductase, a multisubunit transmembrane complex that is part of the mitochondrial electron transport chain which drives oxidative phosphorylation. The respiratory chain contains 3 multisubunit complexes succinate dehydrogenase (complex II, CII), ubiquinol-cytochrome c oxidoreductase (cytochrome b-c1 complex, complex III, CIII) and cytochrome c oxidase (complex IV, CIV), that cooperate to transfer electrons derived from NADH and succinate to molecular oxygen, creating an electrochemical gradient over the inner membrane that drives transmembrane transport and the ATP synthase. The cytochrome b-c1 complex catalyzes electron transfer from ubiquinol to cytochrome c, linking this redox reaction to translocation of protons across the mitochondrial inner membrane, with protons being carried across the membrane as hydrogens on the quinol. In the process called Q cycle, 2 protons are consumed from the matrix, 4 protons are released into the intermembrane space and 2 electrons are passed to cytochrome c. The 2 core subunits UQCRC1/QCR1 and UQCRC2/QCR2 are homologous to the 2 mitochondrial-processing peptidase (MPP) subunits beta-MPP and alpha-MPP respectively, and they seem to have preserved their MPP processing properties. May be involved in the in situ processing of UQCRFS1 into the mature Rieske protein and its mitochondrial targeting sequence (MTS)/subunit 9 when incorporated into complex III. Seems to play an important role in the maintenance of proper mitochondrial function in nigral dopaminergic neurons. The chain is Cytochrome b-c1 complex subunit 1, mitochondrial from Mesocricetus auratus (Golden hamster).